The sequence spans 626 residues: ATP-dependent rRNA helicase spb4 (626 aa).

Positions 14–42 match the Q motif motif; that stretch reads WDALTPSLAEWVLDAISSMGFEKMTPVQA. One can recognise a Helicase ATP-binding domain in the interval 45–246; it reads IPLFMGNKDV…RVGLRNPVKI (202 aa). 58–65 contacts ATP; sequence AVTGSGKT. A DEAD box motif is present at residues 194 to 197; sequence DEAD. In terms of domain architecture, Helicase C-terminal spans 279–437; sequence ALLSLLSQLE…TTGEAAKILI (159 aa). A disordered region spans residues 553-599; sequence QREAWSQKHEKQDLKELKREKKKRKREIERLEKMTDEEKKEEQAKEK. Composition is skewed to basic and acidic residues over residues 554 to 571 and 578 to 599; these read REAW…ELKR and REIE…AKEK. Residues 558–620 are a coiled coil; the sequence is SQKHEKQDLK…RKIEDDADVE (63 aa).

It belongs to the DEAD box helicase family. DDX55/SPB4 subfamily. As to quaternary structure, component of pre-60S ribosomal complexes.

It is found in the nucleus. The protein localises to the nucleolus. It catalyses the reaction ATP + H2O = ADP + phosphate + H(+). Functionally, ATP-binding RNA helicase involved in the biogenesis of 60S ribosomal subunits. Binds 90S pre-ribosomal particles and dissociates from pre-60S ribosomal particles after processing of 27SB pre-rRNA. Required for the normal formation of 18S rRNA through the processing of pre-rRNAs at sites A0, A1 and A2, and the normal formation of 25S and 5.8S rRNAs through the processing of pre-rRNAs at sites C1 and C2. The protein is ATP-dependent rRNA helicase spb4 of Botryotinia fuckeliana (strain B05.10) (Noble rot fungus).